We begin with the raw amino-acid sequence, 471 residues long: Coagulation factor IX (471 aa).

The first 28 residues, 1-28 (MKHLNTVMAESPALITIFLLGYLLSTEC), serve as a signal peptide directing secretion. The propeptide occupies 29–46 (AVFLDRENATKILTRPKR). Ca(2+) is bound by residues tyrosine 47, asparagine 48, glutamate 53, glutamate 54, glutamate 61, glutamate 63, glutamate 66, glutamate 67, glutamate 72, glutamate 73, and glutamate 76. The Gla domain occupies 47-92 (YNSGKLEEFVRGNLERECIEERCSFEEAREVFENTEKTTEFWKQYV). A 4-carboxyglutamate mark is found at glutamate 53, glutamate 54, glutamate 61, glutamate 63, glutamate 66, glutamate 67, glutamate 72, glutamate 73, glutamate 76, glutamate 79, and glutamate 82. Residue glutamate 61 coordinates Mg(2+). Residues cysteine 64 and cysteine 69 are joined by a disulfide bond. Glutamate 66 provides a ligand contact to Mg(2+). Glutamate 72 is a Mg(2+) binding site. Glutamate 76 contributes to the Mg(2+) binding site. Glutamate 82 contributes to the Ca(2+) binding site. Residue glutamate 82 participates in Mg(2+) binding. The O-linked (GalNAc...) threonine glycan is linked to threonine 85. The Ca(2+) site is built by glutamate 86, aspartate 93, glycine 94, and glutamine 96. Glutamate 86 bears the 4-carboxyglutamate mark. Glutamate 86 lines the Mg(2+) pocket. An EGF-like 1; calcium-binding domain is found at 93–129 (DGDQCESNPCLNGGICKDDISSYECWCQVGFEGRNCE). Disulfide bonds link cysteine 97-cysteine 108, cysteine 102-cysteine 117, cysteine 119-cysteine 128, cysteine 134-cysteine 145, cysteine 141-cysteine 155, cysteine 157-cysteine 170, cysteine 178-cysteine 345, cysteine 262-cysteine 278, cysteine 392-cysteine 406, and cysteine 417-cysteine 445. Serine 99 is a glycosylation site (O-linked (Glc...) serine). Residues aspartate 110 and aspartate 111 each contribute to the Ca(2+) site. (3R)-3-hydroxyaspartate is present on aspartate 110. Serine 114 bears the Phosphoserine mark. The 42-residue stretch at 130–171 (LDATCNIKNGRCKQFCKNSPDNKVICSCTEGYQLAEDQKSCE) folds into the EGF-like 2 domain. Residues 193-236 (AETVFSNMDYENSTEAVFIQDDITDGAILNNVTESSESLNDFTR) constitute a propeptide, activation peptide. Tyrosine 202 is modified (sulfotyrosine). Asparagine 204 is a glycosylation site (N-linked (GlcNAc...) asparagine). Serine 205 carries the phosphoserine modification. Threonine 206 carries the phosphothreonine; alternate modification. An O-linked (GalNAc...) threonine; alternate glycan is attached at threonine 206. The N-linked (GlcNAc...) asparagine glycan is linked to asparagine 223. Threonine 225 and threonine 235 each carry an O-linked (GalNAc...) threonine glycan. A Peptidase S1 domain is found at 237–469 (VVGGENAKPG…YVNWIKEKTK (233 aa)). Catalysis depends on histidine 277, which acts as the Charge relay system. 4 residues coordinate Ca(2+): glutamate 291, asparagine 293, glutamate 298, and glutamate 301. The Charge relay system role is filled by aspartate 325. Residue serine 421 is the Charge relay system of the active site.

This sequence belongs to the peptidase S1 family. Heterodimer of a light chain and a heavy chain; disulfide-linked. Interacts (inactive and activated) with F11 (activated) in calcium-dependent manner. Interacts with SERPINC1. In terms of processing, activated by factor XIa, which excises the activation peptide. The propeptide can also be removed by snake venom protease. Activated by coagulation factor VIIa-tissue factor (F7-F3) complex in calcium-dependent manner. The iron and 2-oxoglutarate dependent 3-hydroxylation of aspartate and asparagine is (R) stereospecific within EGF domains. Post-translationally, predominantly O-glucosylated at Ser-99 by POGLUT1 in vitro. Detected in liver.

The protein resides in the secreted. It carries out the reaction Selective cleavage of Arg-|-Ile bond in factor X to form factor Xa.. In terms of biological role, factor IX is a vitamin K-dependent plasma protein that participates in the intrinsic pathway of blood coagulation by converting factor X to its active form in the presence of Ca(2+) ions, phospholipids, and factor VIIIa. In Mus musculus (Mouse), this protein is Coagulation factor IX (F9).